The sequence spans 406 residues: Putative gustatory receptor 59f (406 aa).

Residues 1–36 (MRSSATKGAKLKNSPRERLSSFNPQYAERYKELYRT) lie on the Cytoplasmic side of the membrane. Residues 37-57 (LFWLLLISVLANTAPITILPG) traverse the membrane as a helical segment. Topologically, residues 58-69 (CPNRFYRLVHLS) are extracellular. Residues 70–90 (WMILWYGLFVLGSYWEFVLVT) traverse the membrane as a helical segment. Residues 91–99 (TQRVSLDRY) are Cytoplasmic-facing. The chain crosses the membrane as a helical span at residues 100-120 (LNAIESAIYVVHIFSIMLLTW). At 121–154 (QCRNWAPKLMTNIVTSDLNRAYTIDCNRTKRFIR) the chain is on the extracellular side. An N-linked (GlcNAc...) asparagine glycan is attached at Asn147. The helical transmembrane segment at 155–175 (LQLFLVGIFACLAIFFNIWTH) threads the bilayer. Over 176–189 (KFVVYRSILSINSY) the chain is Cytoplasmic. A helical transmembrane segment spans residues 190–210 (VMPNIISSISFAQYYLLLQGI). The Extracellular segment spans residues 211-259 (AWRQRRLTEGLERELTHLHSPRISEVQKIRMHHANLIDFTKAVNRTFQY). A glycan (N-linked (GlcNAc...) asparagine) is linked at Asn254. The chain crosses the membrane as a helical span at residues 260–280 (SILLLFVGCFLNFNLVLFLVY). Topologically, residues 281-364 (QGIENPSMAD…RQHVVCGVIN (84 aa)) are cytoplasmic. The chain crosses the membrane as a helical span at residues 365-385 (LDLKFLTTLLVASADFFIFLL). Residues 386–406 (QYDVTYEALSKSVQGNVTRYK) are Extracellular-facing. Asn401 is a glycosylation site (N-linked (GlcNAc...) asparagine).

This sequence belongs to the insect chemoreceptor superfamily. Gustatory receptor (GR) family. Gr10a subfamily. Expressed in the adult abdomen and wing. In larvae, is expressed in neurons of the terminal external chemosensory organ.

Its subcellular location is the cell membrane. Functionally, probable gustatory receptor which mediates acceptance or avoidance behavior, depending on its substrates. The polypeptide is Putative gustatory receptor 59f (Gr59f) (Drosophila melanogaster (Fruit fly)).